The primary structure comprises 361 residues: Single-stranded DNA-binding protein 2 (361 aa).

Lysine 6 carries the post-translational modification N6-acetyllysine. A LisH domain is found at 18–50 (AREKLALYVYEYLLHVGAQKSAQTFLSEIRWEK). Disordered stretches follow at residues 147–171 (GGVPGSQPLLPSGMDPTRQQGHPNM) and 194–361 (GAMR…TMSV). Residues 204–219 (GGPGMPGMNMGPGGGR) are compositionally biased toward gly residues. Residues 225-236 (TNANSIPYSSAS) show a composition bias toward polar residues. A compositionally biased stretch (pro residues) spans 246-256 (GGGPPGTPIMP). Gly residues predominate over residues 289–299 (GSDGPMGGLGG). A compositionally biased stretch (polar residues) spans 317–332 (ISKNSPNNMSLSNQPG). Phosphoserine is present on serine 321. A Phosphothreonine modification is found at threonine 333. A compositionally biased stretch (polar residues) spans 346 to 361 (NPFQSESYSPSMTMSV).

As to expression, ubiquitous.

It localises to the nucleus. In Homo sapiens (Human), this protein is Single-stranded DNA-binding protein 2 (SSBP2).